A 55-amino-acid polypeptide reads, in one-letter code: MAVQQNRKTRAKRGMRRSHDALTTAALTVDQTSGEIHRRHHVTADGFYRGKKVIA.

This sequence belongs to the bacterial ribosomal protein bL32 family.

The polypeptide is Large ribosomal subunit protein bL32 (Aeromonas hydrophila subsp. hydrophila (strain ATCC 7966 / DSM 30187 / BCRC 13018 / CCUG 14551 / JCM 1027 / KCTC 2358 / NCIMB 9240 / NCTC 8049)).